The primary structure comprises 405 residues: Tryptophan synthase beta chain (405 aa).

The residue at position 98 (lysine 98) is an N6-(pyridoxal phosphate)lysine.

Belongs to the TrpB family. In terms of assembly, tetramer of two alpha and two beta chains. Pyridoxal 5'-phosphate serves as cofactor.

It catalyses the reaction (1S,2R)-1-C-(indol-3-yl)glycerol 3-phosphate + L-serine = D-glyceraldehyde 3-phosphate + L-tryptophan + H2O. It functions in the pathway amino-acid biosynthesis; L-tryptophan biosynthesis; L-tryptophan from chorismate: step 5/5. Functionally, the beta subunit is responsible for the synthesis of L-tryptophan from indole and L-serine. The polypeptide is Tryptophan synthase beta chain (Parvibaculum lavamentivorans (strain DS-1 / DSM 13023 / NCIMB 13966)).